The following is a 144-amino-acid chain: Large ribosomal subunit protein uL13 (144 aa).

It belongs to the universal ribosomal protein uL13 family. In terms of assembly, part of the 50S ribosomal subunit.

Functionally, this protein is one of the early assembly proteins of the 50S ribosomal subunit, although it is not seen to bind rRNA by itself. It is important during the early stages of 50S assembly. The sequence is that of Large ribosomal subunit protein uL13 from Heliobacterium modesticaldum (strain ATCC 51547 / Ice1).